Reading from the N-terminus, the 238-residue chain is Probable transglycosylase SceD 1 (238 aa).

Positions 1-27 are cleaved as a signal peptide; that stretch reads MKKTVVASTLAVGLGVTGFAAGNSADA. Polar residues predominate over residues 87-97; the sequence is TNAPAQETAEQ. Residues 87–161 are disordered; that stretch reads TNAPAQETAE…SEASEGSSVN (75 aa). The span at 102–156 shows a compositional bias: low complexity; that stretch reads EQPQQTEQASTEQPAQEAAPQTEETQQPQQEATTQTTSSSNESTSNESSSSEASE.

It belongs to the transglycosylase family. SceD subfamily.

The protein resides in the secreted. In terms of biological role, is able to cleave peptidoglycan and affects clumping and separation of bacterial cells. The protein is Probable transglycosylase SceD 1 (sceD1) of Staphylococcus saprophyticus subsp. saprophyticus (strain ATCC 15305 / DSM 20229 / NCIMB 8711 / NCTC 7292 / S-41).